Here is a 248-residue protein sequence, read N- to C-terminus: 2,3-bisphosphoglycerate-dependent phosphoglycerate mutase (248 aa).

Residues 10–17 (RHGQSEWN), 23–24 (TG), Arg62, 89–92 (ERHY), Lys100, 116–117 (RR), and 183–184 (GN) each bind substrate. The active-site Tele-phosphohistidine intermediate is the His11. Glu89 functions as the Proton donor/acceptor in the catalytic mechanism.

It belongs to the phosphoglycerate mutase family. BPG-dependent PGAM subfamily.

It catalyses the reaction (2R)-2-phosphoglycerate = (2R)-3-phosphoglycerate. It functions in the pathway carbohydrate degradation; glycolysis; pyruvate from D-glyceraldehyde 3-phosphate: step 3/5. Catalyzes the interconversion of 2-phosphoglycerate and 3-phosphoglycerate. The polypeptide is 2,3-bisphosphoglycerate-dependent phosphoglycerate mutase (Corynebacterium glutamicum (strain ATCC 13032 / DSM 20300 / JCM 1318 / BCRC 11384 / CCUG 27702 / LMG 3730 / NBRC 12168 / NCIMB 10025 / NRRL B-2784 / 534)).